The primary structure comprises 185 residues: Lysine-rich arabinogalactan protein 17 (185 aa).

An N-terminal signal peptide occupies residues 1–21; it reads MTRNILLTVTLICIVFITVGG. Positions 25–160 are disordered; the sequence is ATAPIHSPST…FSPAADDQSG (136 aa). The segment covering 43–68 has biased composition (low complexity); the sequence is SPAISPAAPTPESTEAPAKTPVEAPV. Residues 69–88 are compositionally biased toward pro residues; that stretch reads EAPPSPTPASTPQISPPAPS. Residues 111-122 are compositionally biased toward basic residues; that stretch reads TKHKKKTKKHKT. The segment covering 135–146 has biased composition (pro residues); that stretch reads PPAPPGEAPGPG. Serine 159 is lipidated: GPI-anchor amidated serine. Positions 160–185 are cleaved as a propeptide — removed in mature form; sequence GAQRISVVIQMVGAAAIAWSLLVLAF.

It belongs to the lysine-rich AGP family. O-glycosylated on the hydroxyproline residues. As to expression, predominantly expressed in open flowers. Also expressed in leaves and stems, and at a lower level in roots.

Its subcellular location is the cell membrane. Its function is as follows. Proteoglycan that seems to be implicated in diverse developmental roles such as differentiation, cell-cell recognition, embryogenesis and programmed cell death. The chain is Lysine-rich arabinogalactan protein 17 (AGP17) from Arabidopsis thaliana (Mouse-ear cress).